The following is a 317-amino-acid chain: Pinoresinol reductase 1 (317 aa).

The NADP(+) site is built by threonine 18, tyrosine 20, isoleucine 21, arginine 41, lysine 50, serine 90, glycine 91, arginine 95, asparagine 98, serine 121, and glutamate 122. Methionine 125 contributes to the (-)-pinoresinol binding site. Residues lysine 144 and phenylalanine 166 each contribute to the NADP(+) site. Lysine 144 (proton acceptor) is an active-site residue. Positions 177 and 178 each coordinate (-)-pinoresinol.

Belongs to the NmrA-type oxidoreductase family. Isoflavone reductase subfamily. As to quaternary structure, forms homodimers. In terms of tissue distribution, expressed in roots and stems.

It carries out the reaction (-)-lariciresinol + NADP(+) = (-)-pinoresinol + NADPH + H(+). The catalysed reaction is (+)-lariciresinol + NADP(+) = (+)-pinoresinol + NADPH + H(+). In terms of biological role, reductase involved in lignan biosynthesis. Involved in secondary cell wall biosynthesis in fiber cells. Unlike conventional pinoresinol reductases that can reduce both pinoresinol and lariciresinol, PRR1 shows a strict substrate preference toward pinoresinol. Active on both (+) and (-)-pinoresinol. Abstracts the 4R-hydride from the NADPH cofactor during catalysis. This is Pinoresinol reductase 1 from Arabidopsis thaliana (Mouse-ear cress).